The primary structure comprises 519 residues: Histidine--tRNA ligase (519 aa).

The protein belongs to the class-II aminoacyl-tRNA synthetase family. In terms of assembly, homodimer.

Its subcellular location is the cytoplasm. It carries out the reaction tRNA(His) + L-histidine + ATP = L-histidyl-tRNA(His) + AMP + diphosphate + H(+). The protein is Histidine--tRNA ligase of Rhodopseudomonas palustris (strain BisB18).